Here is a 163-residue protein sequence, read N- to C-terminus: R-phycoerythrin alpha chain (163 aa).

Residues Cys-82 and Cys-139 each contribute to the (2R,3E)-phycoerythrobilin site.

It belongs to the phycobiliprotein family. Heterodimer of an alpha and a beta chain. Post-translationally, contains two covalently linked bilin chromophores.

Its subcellular location is the plastid. It is found in the chloroplast thylakoid membrane. Functionally, light-harvesting photosynthetic bile pigment-protein from the phycobiliprotein complex. The protein is R-phycoerythrin alpha chain (cpeA) of Aglaothamnion neglectum (Red alga).